The sequence spans 77 residues: DNA-directed RNA polymerase subunit epsilon (77 aa).

Belongs to the RNA polymerase subunit epsilon family. RNAP is composed of a core of 2 alpha, a beta and a beta' subunit. The core is associated with a delta subunit, and at least one of epsilon or omega. When a sigma factor is associated with the core the holoenzyme is formed, which can initiate transcription.

The catalysed reaction is RNA(n) + a ribonucleoside 5'-triphosphate = RNA(n+1) + diphosphate. Functionally, a non-essential component of RNA polymerase (RNAP). The sequence is that of DNA-directed RNA polymerase subunit epsilon from Streptococcus pneumoniae serotype 2 (strain D39 / NCTC 7466).